A 720-amino-acid chain; its full sequence is MIPTEDASARKREIEEKLKQEQETLSFIRESLEKSDQLTKGMVSILSSFESRLMQLENSIIPVHKQTENLQRLQENVDKTLSNMDHVISYYHVAKDTDKIIREGPAGRLYEYLACIAKIQKAVEYFQDNNPDSPELNTVKARFEKGKELLEAEFRSLLTRYSKPVPPVLILDAIGGDEDMEVQEEVTLEHLPEAVLQDIICISAWLVEYGRNQDFMNVYFQVRSSQLDRSIKGLKEHFRKNSATSAIHSPAVQTKRKETPTKKAPKRPVYIPGTIRKAQNLLKQYSQHGLDGKKGSNLTPLEGFEHDLRGVKHLSDEKHGATAGKDDVLDIEIDSYIHCISAFVKLAQSEYALLTEIIPEHHQKKTFDSLIQEALDNLMLEGDNIVSAARRAIMRHDYSAVLTIFPILRHLKQTKPDFDATLQGTAASTKNKLPALITSMETIGAKALEEFADSIKNDPDKEYNMPKDGTVHELTSNAILFLQQLLDFQETAGAMLASQVLGDTYNIPLDPRESSSSASSYSSEFSRKLLSTYIYKVLGNLQLNLSNKAKVYEDPALRAIFLHNNYNYILKSLEKSELIQLVAVTVKKVESSYRELIEQEIQNYQRSWLRVTEHLAERNIPDFQPGAKLKDKERQIIKDKFKGFNDGLEELCKIQKGWAVPDKEQRDTIRHAQKRVVSLTYKAFLQRCANISFTKNPEKYHRYSPEQVEDMIDRLFDTSA.

Coiled-coil stretches lie at residues 5–34 (EDAS…SLEK) and 63–83 (VHKQ…TLSN). Residue Ser133 is modified to Phosphoserine. Positions 249–268 (SPAVQTKRKETPTKKAPKRP) are disordered.

The protein belongs to the EXO70 family.

It is found in the cytoplasm. It localises to the cytosol. Its subcellular location is the cell membrane. The protein localises to the midbody. The protein resides in the midbody ring. Component of the exocyst complex involved in the docking of exocytic vesicles with fusion sites on the plasma membrane. It is required for neuron survival and plays an essential role in telencephalon development. The chain is Exocyst complex component 7 (exoc7) from Danio rerio (Zebrafish).